The sequence spans 420 residues: Protein disulfide isomerase CRELD1 (420 aa).

Positions 1 to 29 are cleaved as a signal peptide; the sequence is MAPWPPKGLVPAMLWGLSLFLNLPGPIWL. Over 30–362 the chain is Extracellular; it reads QPSPPPQSSP…GFFSEMTEDE (333 aa). The CXXC signature appears at 46–49; sequence CHTC. Cys-46 and Cys-49 are disulfide-bonded. Asn-79 carries N-linked (GlcNAc...) asparagine glycosylation. Residues 153-193 form the EGF-like 1 domain; that stretch reads LPCPGGTERPCGGYGQCEGEGTRGGSGHCDCQAGYGGEACG. Intrachain disulfides connect Cys-155–Cys-169, Cys-163–Cys-181, and Cys-183–Cys-192. Asn-205 carries an N-linked (GlcNAc...) asparagine glycan. FU repeat units follow at residues 208 to 256 and 268 to 315; these read HLVC…GANC and SYEC…EVCP. Positions 278-281 match the CXXC motif; sequence CLGC. Intrachain disulfides connect Cys-278–Cys-281, Cys-309–Cys-321, Cys-314–Cys-330, and Cys-332–Cys-343. The 40-residue stretch at 305-344 folds into the EGF-like 2; calcium-binding domain; the sequence is DVDECETEVCPGENKQCENTEGGYRCICAEGYKQMEGICV. Residues 363-383 traverse the membrane as a helical segment; the sequence is LVVLQQMFFGIIICALATLAA. A topological domain (cytoplasmic) is located at residue Lys-384. The chain crosses the membrane as a helical span at residues 385-405; that stretch reads GDLVFTAIFIGAVAAMTGYWL. The Extracellular portion of the chain corresponds to 406 to 420; the sequence is SERSDRVLEGFIKGR.

It belongs to the CRELD family. As to expression, highly expressed in fetal lung, liver, kidney, adult heart, brain and skeletal muscle. Weakly expressed in placenta, fetal brain, and adult lung, liver, kidney and pancreas.

It is found in the membrane. The enzyme catalyses Catalyzes the rearrangement of -S-S- bonds in proteins.. In terms of biological role, protein disulfide isomerase. Promotes the localization of acetylcholine receptors (AChRs) to the plasma membrane. The polypeptide is Protein disulfide isomerase CRELD1 (CRELD1) (Homo sapiens (Human)).